The following is a 476-amino-acid chain: Cytochrome c oxidase subunit 1 (476 aa).

The chain crosses the membrane as a helical span at residues L19 to L39. E42 serves as a coordination point for Ca(2+). 8 helical membrane-spanning segments follow: residues M61–G81, I105–F125, L144–I164, L194–M214, L240–I260, M278–Y298, F309–L329, and L345–G365. A Fe(II)-heme a-binding site is contributed by H66. Residue H246 coordinates Cu cation. Residues H246 to Y250 constitute a cross-link (1'-histidyl-3'-tyrosine (His-Tyr)). Y250 contributes to the O2 binding site. 2 residues coordinate Cu cation: H295 and H296. H374 and D375 together coordinate Mg(2+). Helical transmembrane passes span V379–V399 and T415–M435. Residue H382 coordinates heme a3. A Fe(II)-heme a-binding site is contributed by H384. A Ca(2+)-binding site is contributed by P448. Residues N455–F475 traverse the membrane as a helical segment.

Belongs to the heme-copper respiratory oxidase family. Component of the cytochrome c oxidase (complex IV, CIV), a multisubunit enzyme composed of a catalytic core of 3 subunits and several supernumerary subunits. The complex exists as a monomer or a dimer and forms supercomplexes (SCs) in the inner mitochondrial membrane with ubiquinol-cytochrome c oxidoreductase (cytochrome b-c1 complex, complex III, CIII). Heme is required as a cofactor. It depends on Cu cation as a cofactor.

It localises to the mitochondrion inner membrane. It catalyses the reaction 4 Fe(II)-[cytochrome c] + O2 + 8 H(+)(in) = 4 Fe(III)-[cytochrome c] + 2 H2O + 4 H(+)(out). It participates in energy metabolism; oxidative phosphorylation. Its function is as follows. Component of the cytochrome c oxidase, the last enzyme in the mitochondrial electron transport chain which drives oxidative phosphorylation. The respiratory chain contains 3 multisubunit complexes succinate dehydrogenase (complex II, CII), ubiquinol-cytochrome c oxidoreductase (cytochrome b-c1 complex, complex III, CIII) and cytochrome c oxidase (complex IV, CIV), that cooperate to transfer electrons derived from NADH and succinate to molecular oxygen, creating an electrochemical gradient over the inner membrane that drives transmembrane transport and the ATP synthase. Cytochrome c oxidase is the component of the respiratory chain that catalyzes the reduction of oxygen to water. Electrons originating from reduced cytochrome c in the intermembrane space (IMS) are transferred via the dinuclear copper A center (CU(A)) of subunit 2 and heme A of subunit 1 to the active site in subunit 1, a binuclear center (BNC) formed by heme A3 and copper B (CU(B)). The BNC reduces molecular oxygen to 2 water molecules using 4 electrons from cytochrome c in the IMS and 4 protons from the mitochondrial matrix. This Plasmodium chabaudi protein is Cytochrome c oxidase subunit 1 (COI).